The following is a 384-amino-acid chain: Probable L-tyrosine/L-aspartate decarboxylase (384 aa).

The residue at position 233 (lysine 233) is an N6-(pyridoxal phosphate)lysine.

Belongs to the group II decarboxylase family. MfnA subfamily. It depends on pyridoxal 5'-phosphate as a cofactor.

It carries out the reaction L-tyrosine + H(+) = tyramine + CO2. The enzyme catalyses L-aspartate + H(+) = beta-alanine + CO2. Its pathway is cofactor biosynthesis; methanofuran biosynthesis. It functions in the pathway cofactor biosynthesis; coenzyme A biosynthesis. In terms of biological role, catalyzes the decarboxylation of L-tyrosine to produce tyramine for methanofuran biosynthesis. Can also catalyze the decarboxylation of L-aspartate to produce beta-alanine for coenzyme A (CoA) biosynthesis. This chain is Probable L-tyrosine/L-aspartate decarboxylase, found in Methanococcus maripaludis (strain C5 / ATCC BAA-1333).